The sequence spans 444 residues: Chromosome partition protein MukF (444 aa).

The tract at residues 212-240 (LDETSGNLRELQDTLNAAGDKLQAQLLRI) is leucine-zipper.

This sequence belongs to the MukF family. In terms of assembly, interacts, and probably forms a ternary complex, with MukE and MukB via its C-terminal region. The complex formation is stimulated by calcium or magnesium. It is required for an interaction between MukE and MukB.

Its subcellular location is the cytoplasm. It is found in the nucleoid. Involved in chromosome condensation, segregation and cell cycle progression. May participate in facilitating chromosome segregation by condensation DNA from both sides of a centrally located replisome during cell division. Not required for mini-F plasmid partitioning. Probably acts via its interaction with MukB and MukE. Overexpression results in anucleate cells. It has a calcium binding activity. This Haemophilus influenzae (strain PittGG) protein is Chromosome partition protein MukF.